Reading from the N-terminus, the 336-residue chain is UPF0324 membrane protein SP_0034 (336 aa).

The next 8 membrane-spanning stretches (helical) occupy residues 65-84 (LLQY…QVFA), 91-113 (PVIL…FFAL), 118-140 (ATLV…APVI), 153-175 (VIFF…LHLS), 211-233 (SATI…LSYW), 249-271 (VFPL…TSLG), 286-305 (FLIV…VAMV), and 312-334 (ILLG…TLIG).

Belongs to the UPF0324 family.

The protein resides in the cell membrane. The polypeptide is UPF0324 membrane protein SP_0034 (Streptococcus pneumoniae serotype 4 (strain ATCC BAA-334 / TIGR4)).